The following is a 2184-amino-acid chain: Genome polyprotein (2184 aa).

G2 is lipidated: N-myristoyl glycine; by host. At 2–1494 the chain is on the cytoplasmic side; sequence GAQVSTQKTG…HVSRAFICLQ (1493 aa). The interval 566-582 is amphipathic alpha-helix; sequence FYQSPVEGAIERAIARV. Residues H871 and D889 each act as for protease 2A activity in the active site. Zn(2+) contacts are provided by C906 and C908. Catalysis depends on C960, which acts as the For protease 2A activity. Zn(2+)-binding residues include C966 and H968. The membrane-binding stretch occupies residues 1100 to 1172; it reads SNGWLKKFTE…EQSAPSQSDQ (73 aa). The interval 1100-1238 is oligomerization; that stretch reads SNGWLKKFTE…SPGAGKSVAT (139 aa). Positions 1121-1125 are RNA-binding; the sequence is AIKIQ. Positions 1204 to 1360 constitute an SF3 helicase domain; it reads EKKMSNYIQF…SMYSQNGKIN (157 aa). Zn(2+) contacts are provided by C1368, C1380, and C1385. The C4-type; degenerate zinc finger occupies 1368–1385; it reads CDEECCPVNFKKCCPLVC. Residues 1412 to 1419 are RNA-binding; that stretch reads EYNHRHSV. Residues 1423 to 1428 are oligomerization; the sequence is LEALFQ. Residues 1495 to 1510 lie within the membrane without spanning it; it reads ALTTFVSVAGIIYIIY. The Cytoplasmic segment spans residues 1511 to 2184; sequence KLFAGFQGAY…TLRRKWLDSF (674 aa). Y1520 carries the O-(5'-phospho-RNA)-tyrosine modification. Residues 1540-1718 enclose the Peptidase C3 domain; sequence GPAFEFAVAM…FSAALLKHYF (179 aa). Catalysis depends on for protease 3C activity residues H1579, E1610, and C1686. Residues 1949–2065 enclose the RdRp catalytic domain; sequence GHLIAFDYSG…SYPWPIDASL (117 aa). The Mg(2+) site is built by D1955 and D2051.

Belongs to the picornaviruses polyprotein family. Interacts with capsid protein VP1 and capsid protein VP3 to form heterotrimeric protomers. In terms of assembly, interacts with capsid protein VP0, and capsid protein VP3 to form heterotrimeric protomers. Five protomers subsequently associate to form pentamers which serve as building blocks for the capsid. Interacts with capsid protein VP2, capsid protein VP3 and capsid protein VP4 following cleavage of capsid protein VP0. Interacts with host CXADR. As to quaternary structure, interacts with capsid protein VP1 and capsid protein VP3 in the mature capsid. Interacts with capsid protein VP0 and capsid protein VP1 to form heterotrimeric protomers. Five protomers subsequently associate to form pentamers which serve as building blocks for the capsid. Interacts with capsid protein VP4 in the mature capsid. Interacts with protein 2C; this interaction may be important for virion morphogenesis. In terms of assembly, interacts with capsid protein VP1 and capsid protein VP3. As to quaternary structure, homodimer. Homohexamer; forms a hexameric ring structure with 6-fold symmetry characteristic of AAA+ ATPases. Interacts (via N-terminus) with host RTN3 (via reticulon domain); this interaction is important for viral replication. Interacts with capsid protein VP3; this interaction may be important for virion morphogenesis. In terms of assembly, interacts with protein 3CD. As to quaternary structure, homodimer. Interacts with host GBF1. Interacts (via GOLD domain) with host ACBD3 (via GOLD domain); this interaction allows the formation of a viral protein 3A/ACBD3 heterotetramer with a 2:2 stoichiometry, which will stimulate the recruitment of host PI4KB in order to synthesize PI4P at the viral RNA replication sites. Interacts with RNA-directed RNA polymerase. In terms of assembly, interacts with protein 3AB and with RNA-directed RNA polymerase. As to quaternary structure, interacts with Viral protein genome-linked and with protein 3CD. Mg(2+) is required as a cofactor. Specific enzymatic cleavages in vivo by the viral proteases yield processing intermediates and the mature proteins. In terms of processing, myristoylation is required for the formation of pentamers during virus assembly. Further assembly of 12 pentamers and a molecule of genomic RNA generates the provirion. Post-translationally, during virion maturation, immature virions are rendered infectious following cleavage of VP0 into VP4 and VP2. This maturation seems to be an autocatalytic event triggered by the presence of RNA in the capsid and it is followed by a conformational change infectious virion. Myristoylation is required during RNA encapsidation and formation of the mature virus particle. In terms of processing, VPg is uridylylated by the polymerase into VPg-pUpU. This acts as a nucleotide-peptide primer for the genomic RNA replication.

It is found in the virion. The protein resides in the host cytoplasm. It localises to the host cytoplasmic vesicle membrane. The protein localises to the host nucleus. It carries out the reaction a ribonucleoside 5'-triphosphate + H2O = a ribonucleoside 5'-diphosphate + phosphate + H(+). It catalyses the reaction Selective cleavage of Tyr-|-Gly bond in the picornavirus polyprotein.. The catalysed reaction is RNA(n) + a ribonucleoside 5'-triphosphate = RNA(n+1) + diphosphate. The enzyme catalyses Selective cleavage of Gln-|-Gly bond in the poliovirus polyprotein. In other picornavirus reactions Glu may be substituted for Gln, and Ser or Thr for Gly.. With respect to regulation, replication or transcription is subject to high level of random mutations by the nucleotide analog ribavirin. Its function is as follows. Forms an icosahedral capsid of pseudo T=3 symmetry with capsid proteins VP2 and VP3. The capsid is 300 Angstroms in diameter, composed of 60 copies of each capsid protein and enclosing the viral positive strand RNA genome. Capsid protein VP1 mainly forms the vertices of the capsid. Capsid protein VP1 interacts with host CXADR to provide virion attachment to target host cells. This attachment induces virion internalization. Tyrosine kinases are probably involved in the entry process. After binding to its receptor, the capsid undergoes conformational changes. Capsid protein VP1 N-terminus (that contains an amphipathic alpha-helix) and capsid protein VP4 are externalized. Together, they shape a pore in the host membrane through which viral genome is translocated to host cell cytoplasm. Forms an icosahedral capsid of pseudo T=3 symmetry with capsid proteins VP2 and VP3. The capsid is 300 Angstroms in diameter, composed of 60 copies of each capsid protein and enclosing the viral positive strand RNA genome. In terms of biological role, lies on the inner surface of the capsid shell. After binding to the host receptor, the capsid undergoes conformational changes. Capsid protein VP4 is released, Capsid protein VP1 N-terminus is externalized, and together, they shape a pore in the host membrane through which the viral genome is translocated into the host cell cytoplasm. Functionally, component of immature procapsids, which is cleaved into capsid proteins VP4 and VP2 after maturation. Allows the capsid to remain inactive before the maturation step. Its function is as follows. Cysteine protease that cleaves viral polyprotein and specific host proteins. It is responsible for the autocatalytic cleavage between the P1 and P2 regions, which is the first cleavage occurring in the polyprotein. Also cleaves the host translation initiation factor EIF4G1, in order to shut down the capped cellular mRNA translation. Inhibits the host nucleus-cytoplasm protein and RNA trafficking by cleaving host members of the nuclear pores. Counteracts stress granule formation probably by antagonizing its assembly or promoting its dissassembly. Cleaves and inhibits host IFIH1/MDA5, thereby inhibiting the type-I IFN production and the establishment of the antiviral state. Cleaves and inhibits host MAVS, thereby inhibiting the type-I IFN production and the establishment of the antiviral state. Plays an essential role in the virus replication cycle by acting as a viroporin. Creates a pore in the host endoplasmic reticulum and as a consequence releases Ca2+ in the cytoplasm of infected cell. In turn, high levels of cytoplasmic calcium may trigger membrane trafficking and transport of viral ER-associated proteins to viroplasms, sites of viral genome replication. In terms of biological role, induces and associates with structural rearrangements of intracellular membranes. Displays RNA-binding, nucleotide binding and NTPase activities. May play a role in virion morphogenesis and viral RNA encapsidation by interacting with the capsid protein VP3. Functionally, localizes the viral replication complex to the surface of membranous vesicles. Together with protein 3CD binds the Cis-Active RNA Element (CRE) which is involved in RNA synthesis initiation. Acts as a cofactor to stimulate the activity of 3D polymerase, maybe through a nucleid acid chaperone activity. Its function is as follows. Localizes the viral replication complex to the surface of membranous vesicles. It inhibits host cell endoplasmic reticulum-to-Golgi apparatus transport and causes the disassembly of the Golgi complex, possibly through GBF1 interaction. This would result in depletion of MHC, trail receptors and IFN receptors at the host cell surface. Plays an essential role in viral RNA replication by recruiting ACBD3 and PI4KB at the viral replication sites, thereby allowing the formation of the rearranged membranous structures where viral replication takes place. Acts as a primer for viral RNA replication and remains covalently bound to viral genomic RNA. VPg is uridylylated prior to priming replication into VPg-pUpU. The oriI viral genomic sequence may act as a template for this. The VPg-pUpU is then used as primer on the genomic RNA poly(A) by the RNA-dependent RNA polymerase to replicate the viral genome. During genome replication, the VPg-RNA linkage is removed by the host TDP2, thereby accelerating replication. During the late stage of the replication cycle, host TDP2 is excluded from sites of viral RNA synthesis and encapsidation, allowing for the generation of progeny virions. In terms of biological role, involved in the viral replication complex and viral polypeptide maturation. It exhibits protease activity with a specificity and catalytic efficiency that is different from protease 3C. Protein 3CD lacks polymerase activity. Protein 3CD binds to the 5'UTR of the viral genome. Functionally, replicates the viral genomic RNA on the surface of intracellular membranes. May form linear arrays of subunits that propagate along a strong head-to-tail interaction called interface-I. Covalently attaches UMP to a tyrosine of VPg, which is used to prime RNA synthesis. The positive stranded RNA genome is first replicated at virus induced membranous vesicles, creating a dsRNA genomic replication form. This dsRNA is then used as template to synthesize positive stranded RNA genomes. ss(+)RNA genomes are either translated, replicated or encapsidated. Its function is as follows. Major viral protease that mediates proteolytic processing of the polyprotein. Cleaves host EIF5B, contributing to host translation shutoff. Also cleaves host PABPC1, contributing to host translation shutoff. Cleaves host NLRP1, triggers host N-glycine-mediated degradation of the autoinhibitory NLRP1 N-terminal fragment. The polypeptide is Genome polyprotein (Coxsackievirus B6 (strain Schmitt)).